Here is a 184-residue protein sequence, read N- to C-terminus: MTNYNGLIVITGPSGVGKGTLVKKLLLENPEIWLSISATTRTPREGEINGKDYFFLNKKEFIDLVDKEGFLEWAEFAGNFYGTPRAQAQEKISVGKKVLLEIELDGARQVRKTFPEGFQIFIAPPSFEELEKRIRTRGTDSELAIQSRLNRAKEELLAKNEFDAIVINDQLDIALLEIKKLIKS.

Residues 5 to 183 form the Guanylate kinase-like domain; that stretch reads NGLIVITGPS…ALLEIKKLIK (179 aa). ATP is bound at residue 12–19; it reads GPSGVGKG.

It belongs to the guanylate kinase family.

It localises to the cytoplasm. The enzyme catalyses GMP + ATP = GDP + ADP. Its function is as follows. Essential for recycling GMP and indirectly, cGMP. The chain is Guanylate kinase from Prochlorococcus marinus (strain SARG / CCMP1375 / SS120).